Consider the following 280-residue polypeptide: DegV domain-containing protein SPy_1698/M5005_Spy1391 (280 aa).

Residues 3–280 (WKIVTDSGCD…DGGLLMGYEI (278 aa)) form the DegV domain. Residues Ser63 and Ser91 each contribute to the hexadecanoate site.

Functionally, may bind long-chain fatty acids, such as palmitate, and may play a role in lipid transport or fatty acid metabolism. The polypeptide is DegV domain-containing protein SPy_1698/M5005_Spy1391 (Streptococcus pyogenes serotype M1).